The following is a 401-amino-acid chain: ATP phosphoribosyltransferase regulatory subunit (401 aa).

The protein belongs to the class-II aminoacyl-tRNA synthetase family. HisZ subfamily. In terms of assembly, heteromultimer composed of HisG and HisZ subunits.

It is found in the cytoplasm. It functions in the pathway amino-acid biosynthesis; L-histidine biosynthesis; L-histidine from 5-phospho-alpha-D-ribose 1-diphosphate: step 1/9. Its function is as follows. Required for the first step of histidine biosynthesis. May allow the feedback regulation of ATP phosphoribosyltransferase activity by histidine. This chain is ATP phosphoribosyltransferase regulatory subunit, found in Cyanothece sp. (strain PCC 7425 / ATCC 29141).